A 374-amino-acid chain; its full sequence is Carbamoyl phosphate synthase small chain (374 aa).

The tract at residues 1 to 186 (MTEPAILVLE…DRNEWKRAAP (186 aa)) is CPSase. The L-glutamine site is built by serine 47, glycine 237, and glycine 239. A Glutamine amidotransferase type-1 domain is found at 189 to 374 (KVVAYDYGVK…RFITMMAAQS (186 aa)). The active-site Nucleophile is cysteine 265. L-glutamine contacts are provided by leucine 266, glutamine 269, asparagine 307, glycine 309, and phenylalanine 310. Active-site residues include histidine 349 and glutamate 351.

It belongs to the CarA family. Composed of two chains; the small (or glutamine) chain promotes the hydrolysis of glutamine to ammonia, which is used by the large (or ammonia) chain to synthesize carbamoyl phosphate. Tetramer of heterodimers (alpha,beta)4.

It catalyses the reaction hydrogencarbonate + L-glutamine + 2 ATP + H2O = carbamoyl phosphate + L-glutamate + 2 ADP + phosphate + 2 H(+). It carries out the reaction L-glutamine + H2O = L-glutamate + NH4(+). It functions in the pathway amino-acid biosynthesis; L-arginine biosynthesis; carbamoyl phosphate from bicarbonate: step 1/1. Its pathway is pyrimidine metabolism; UMP biosynthesis via de novo pathway; (S)-dihydroorotate from bicarbonate: step 1/3. Its function is as follows. Small subunit of the glutamine-dependent carbamoyl phosphate synthetase (CPSase). CPSase catalyzes the formation of carbamoyl phosphate from the ammonia moiety of glutamine, carbonate, and phosphate donated by ATP, constituting the first step of 2 biosynthetic pathways, one leading to arginine and/or urea and the other to pyrimidine nucleotides. The small subunit (glutamine amidotransferase) binds and cleaves glutamine to supply the large subunit with the substrate ammonia. This chain is Carbamoyl phosphate synthase small chain, found in Xylella fastidiosa (strain 9a5c).